The chain runs to 758 residues: 5-methyltetrahydropteroyltriglutamate--homocysteine methyltransferase (758 aa).

5-methyltetrahydropteroyltri-L-glutamate-binding positions include 17 to 20 (RELK) and K117. L-homocysteine-binding positions include 434–436 (IGS) and E487. L-methionine contacts are provided by residues 434 to 436 (IGS) and E487. 5-methyltetrahydropteroyltri-L-glutamate contacts are provided by residues 518 to 519 (RC) and W564. D602 serves as a coordination point for L-homocysteine. D602 lines the L-methionine pocket. Position 608 (E608) interacts with 5-methyltetrahydropteroyltri-L-glutamate. Residues H644, C646, and E668 each coordinate Zn(2+). H697 functions as the Proton donor in the catalytic mechanism. C729 is a Zn(2+) binding site.

Belongs to the vitamin-B12 independent methionine synthase family. The cofactor is Zn(2+).

It catalyses the reaction 5-methyltetrahydropteroyltri-L-glutamate + L-homocysteine = tetrahydropteroyltri-L-glutamate + L-methionine. The protein operates within amino-acid biosynthesis; L-methionine biosynthesis via de novo pathway; L-methionine from L-homocysteine (MetE route): step 1/1. In terms of biological role, catalyzes the transfer of a methyl group from 5-methyltetrahydrofolate to homocysteine resulting in methionine formation. The chain is 5-methyltetrahydropteroyltriglutamate--homocysteine methyltransferase from Yersinia pseudotuberculosis serotype O:1b (strain IP 31758).